Here is a 354-residue protein sequence, read N- to C-terminus: S-adenosylmethionine-dependent nucleotide dehydratase RSAD2 (354 aa).

The region spanning 62–282 (AMTPTSVNYH…LDRHSSISCL (221 aa)) is the Radical SAM core domain. Residues cysteine 76, cysteine 80, and cysteine 83 each contribute to the [4Fe-4S] cluster site.

The protein belongs to the radical SAM superfamily. RSAD2 family. It depends on [4Fe-4S] cluster as a cofactor. In terms of tissue distribution, constitutively expressed in spleen, head kidney and trunk kidney. Following viral infection, detected in most organs including liver, gill, intestine, heart, muscle and brain.

It is found in the endoplasmic reticulum membrane. In terms of biological role, interferon-inducible iron-sulfur (4FE-4S) cluster-binding antiviral protein which plays a major role in the cell antiviral state induced by type I and type II interferon. In Siniperca chuatsi (Mandarin fish), this protein is S-adenosylmethionine-dependent nucleotide dehydratase RSAD2.